A 150-amino-acid polypeptide reads, in one-letter code: Large ribosomal subunit protein bL9 (150 aa).

This sequence belongs to the bacterial ribosomal protein bL9 family.

In terms of biological role, binds to the 23S rRNA. The protein is Large ribosomal subunit protein bL9 of Polaromonas sp. (strain JS666 / ATCC BAA-500).